The chain runs to 319 residues: tRNA (guanine-N(7)-)-methyltransferase (319 aa).

The tract at residues 1 to 44 (MSESPETPEPSPAQSPEAAPEQPQAARPVTPGSQASFGTYGGRP) is disordered. The span at 14-26 (QSPEAAPEQPQAA) shows a compositional bias: low complexity. 4 residues coordinate S-adenosyl-L-methionine: glutamate 103, glutamate 128, asparagine 155, and aspartate 178. Aspartate 178 is a catalytic residue. Substrate contacts are provided by lysine 182 and aspartate 214. The tract at residues 262–288 (APVKEGRAPVSTEHTGPNEGVDETGGW) is disordered. Residue 298–301 (TSFE) coordinates substrate.

This sequence belongs to the class I-like SAM-binding methyltransferase superfamily. TrmB family.

The catalysed reaction is guanosine(46) in tRNA + S-adenosyl-L-methionine = N(7)-methylguanosine(46) in tRNA + S-adenosyl-L-homocysteine. The protein operates within tRNA modification; N(7)-methylguanine-tRNA biosynthesis. In terms of biological role, catalyzes the formation of N(7)-methylguanine at position 46 (m7G46) in tRNA. The polypeptide is tRNA (guanine-N(7)-)-methyltransferase (Arthrobacter sp. (strain FB24)).